Here is a 110-residue protein sequence, read N- to C-terminus: Movement protein TGB2 (110 aa).

Topologically, residues 1-10 are cytoplasmic; it reads MSGAHHLTPP. Residues 11-34 form a helical membrane-spanning segment; sequence TDYGKPVLAASIGISLALLVYTAT. Residues 35-76 lie on the Lumenal side of the membrane; that stretch reads RSTLPHVGDNLHALPHGGRYVDGTKSISYFSPSASKTRDPFP. Residues 77-92 form a helical membrane-spanning segment; it reads FAFLLILTLSGLILLL. The Cytoplasmic portion of the chain corresponds to 93 to 110; it reads SRRRSNPHSCPSCGTPHA.

This sequence belongs to the Tymovirales TGBp2 protein family.

The protein resides in the host endoplasmic reticulum membrane. Its function is as follows. Plays a role in viral cell-to-cell propagation, by facilitating genome transport to neighboring plant cells through plasmosdesmata,. This Plantago asiatica (P1AMV) protein is Movement protein TGB2.